The chain runs to 782 residues: Semaphorin-3G (782 aa).

An N-terminal signal peptide occupies residues 1–22; it reads MAPSAWAICWLLGGLLLHGGSS. One can recognise a Sema domain in the interval 32-519; that stretch reads RLRLSYRDLL…SRLGVAQLRL (488 aa). The N-linked (GlcNAc...) asparagine glycan is linked to asparagine 44. The cysteines at positions 105 and 116 are disulfide-linked. N-linked (GlcNAc...) asparagine glycosylation is present at asparagine 127. 5 cysteine pairs are disulfide-bonded: cysteine 134/cysteine 143, cysteine 270/cysteine 382, cysteine 294/cysteine 342, cysteine 522/cysteine 540, and cysteine 603/cysteine 655. One can recognise an Ig-like C2-type domain in the interval 569–671; that stretch reads PALQCLGQSQ…FSQTVVRLAL (103 aa).

The protein belongs to the semaphorin family.

It localises to the secreted. Functionally, has chemorepulsive activities for sympathetic axons. Ligand of NRP2. This is Semaphorin-3G (SEMA3G) from Homo sapiens (Human).